The primary structure comprises 317 residues: MDQVSRSLPPPFLSRDLHLHPHHQFQHQQQQQQQNHGHDIDQHRIGGLKRDRDADIDPNEHSSAGKDQSTPGSGGESGGGGGGDNHITRRPRGRPAGSKNKPKPPIIITRDSANALKSHVMEVANGCDVMESVTVFARRRQRGICVLSGNGAVTNVTIRQPASVPGGGSSVVNLHGRFEILSLSGSFLPPPAPPAASGLTIYLAGGQGQVVGGSVVGPLMASGPVVIMAASFGNAAYERLPLEEDDQEEQTAGAVANNIDGNATMGGGTQTQTQTQQQQQQQLMQDPTSFIQGLPPNLMNSVQLPAEAYWGTPRPSF.

Disordered stretches follow at residues 22–41 and 48–106; these read HHQF…HDID and LKRD…KPPI. A compositionally biased stretch (low complexity) spans 26–35; sequence QHQQQQQQQN. Residues 48–64 are compositionally biased toward basic and acidic residues; that stretch reads LKRDRDADIDPNEHSSA. Gly residues predominate over residues 72–84; it reads GSGGESGGGGGGD. The segment at residues 89-101 is a DNA-binding region (a.T hook); that stretch reads RRPRGRPAGSKNK. The 141-residue stretch at 113 to 253 folds into the PPC domain; it reads ANALKSHVME…EDDQEEQTAG (141 aa). Positions 258-285 are disordered; sequence NIDGNATMGGGTQTQTQTQQQQQQQLMQ. Over residues 270 to 282 the composition is skewed to low complexity; that stretch reads QTQTQTQQQQQQQ.

In terms of assembly, homodimer. Interacts with HDA1/HDA19, HDA6 and HDA9. As to expression, expressed at the hypocotyl-root transition zone and the root hair zone. Also detected in the inflorescence.

The protein localises to the nucleus. Functionally, transcription factor that specifically binds AT-rich DNA sequences related to the nuclear matrix attachment regions (MARs). Binds an AT-rich DNA sequences in the FLOWERING LOCUS T (FT) promoter. Acts redundantly with AHL18, AHL27 and AHL29 in the regulation of flowering and regulation of the hypocotyl elongation. Plays a role in both photo- and skotomorphogenesis. Acts as a chromatin remodeling factor that modifies the architecture of FLOWERING LOCUS T (FT) chromatin by modulating both H3 acetylation and methylation leading to the regulation of FT expression during flowering induction. In Arabidopsis thaliana (Mouse-ear cress), this protein is AT-hook motif nuclear-localized protein 22.